The following is a 189-amino-acid chain: Phosphoheptose isomerase (189 aa).

The region spanning 34–189 is the SIS domain; it reads VADTLKNGKK…CQAVDEAFRG (156 aa). 49–51 contacts substrate; sequence NGG. Zn(2+)-binding residues include His58 and Glu62. Substrate is bound by residues Glu62, 91–92, 117–119, Ser122, and Gln169; these read ND and STS. Zn(2+) contacts are provided by Gln169 and His177.

This sequence belongs to the SIS family. GmhA subfamily. As to quaternary structure, homotetramer. It depends on Zn(2+) as a cofactor.

It is found in the cytoplasm. The catalysed reaction is 2 D-sedoheptulose 7-phosphate = D-glycero-alpha-D-manno-heptose 7-phosphate + D-glycero-beta-D-manno-heptose 7-phosphate. It participates in carbohydrate biosynthesis; D-glycero-D-manno-heptose 7-phosphate biosynthesis; D-glycero-alpha-D-manno-heptose 7-phosphate and D-glycero-beta-D-manno-heptose 7-phosphate from sedoheptulose 7-phosphate: step 1/1. Catalyzes the isomerization of sedoheptulose 7-phosphate in D-glycero-D-manno-heptose 7-phosphate. The sequence is that of Phosphoheptose isomerase from Campylobacter concisus (strain 13826).